The chain runs to 354 residues: Ornithine transcarbamylase, mitochondrial (354 aa).

The N-terminal 32 residues, 1-32 (MLSNLRILLNNAALRKGHTSVVRHFWCGKPVQ), are a transit peptide targeting the mitochondrion. N6-acetyllysine; alternate is present on K70. The residue at position 70 (K70) is an N6-succinyllysine; alternate. K80 is modified (N6-succinyllysine). An N6-acetyllysine; alternate modification is found at K88. K88 bears the N6-succinyllysine; alternate mark. 90-94 (STRTR) contacts carbamoyl phosphate. Position 133 is a phosphoserine (S133). R141 is a carbamoyl phosphate binding site. R141 provides a ligand contact to L-ornithine. K144 carries the post-translational modification N6-acetyllysine; alternate. K144 carries the post-translational modification N6-succinyllysine; alternate. H168 is a carbamoyl phosphate binding site. N199 provides a ligand contact to L-ornithine. K221, K231, and K238 each carry N6-acetyllysine; alternate. Residues K221, K231, and K238 each carry the N6-succinyllysine; alternate modification. Residue K243 is modified to N6-acetyllysine. 263-267 (DTWIS) lines the L-ornithine pocket. K274 and K289 each carry N6-succinyllysine. K292 is subject to N6-acetyllysine; alternate. At K292 the chain carries N6-succinyllysine; alternate. Residue 302-305 (HCLP) coordinates L-ornithine. C303 is an active-site residue. K307 is subject to N6-acetyllysine; alternate. Residue K307 is modified to N6-succinyllysine; alternate. R330 lines the carbamoyl phosphate pocket. R330 is an L-ornithine binding site.

This sequence belongs to the aspartate/ornithine carbamoyltransferase superfamily. OTCase family. Homotrimer. In terms of processing, acetylation at Lys-88 negatively regulates ornithine carbamoyltransferase activity in response to nutrient signals.

Its subcellular location is the mitochondrion matrix. It carries out the reaction carbamoyl phosphate + L-ornithine = L-citrulline + phosphate + H(+). The protein operates within nitrogen metabolism; urea cycle; L-citrulline from L-ornithine and carbamoyl phosphate: step 1/1. Its activity is regulated as follows. Negatively regulated by lysine acetylation. Catalyzes the second step of the urea cycle, the condensation of carbamoyl phosphate with L-ornithine to form L-citrulline. The urea cycle ensures the detoxification of ammonia by converting it to urea for excretion. The sequence is that of Ornithine transcarbamylase, mitochondrial from Mus musculus (Mouse).